A 576-amino-acid polypeptide reads, in one-letter code: 4-alpha-glucanotransferase, chloroplastic/amyloplastic (576 aa).

Residues 1 to 52 (MAIHTCFSLIPSSFSSPKLPYPKNTTFQSPIPKLSRPTFMFDRKGSFQNGTA) constitute a chloroplast transit peptide.

Belongs to the disproportionating enzyme family. In terms of tissue distribution, present in leaves, stems, roots, and stolons but is most abundant in developing and mature tubers.

The protein localises to the plastid. The protein resides in the chloroplast. It localises to the amyloplast. The catalysed reaction is Transfers a segment of a (1-&gt;4)-alpha-D-glucan to a new position in an acceptor, which may be glucose or a (1-&gt;4)-alpha-D-glucan.. Functionally, may act during starch breakdown to convert small oligosaccharides into larger molecules upon which starch phosphorylase can act, or may change the structure of starch molecules and grain architecture by modifying chain length, or may generate from starch and glucose oligosaccharides which can serve either as primers for new starch phosphoenzyme. The sequence is that of 4-alpha-glucanotransferase, chloroplastic/amyloplastic (DPEP) from Solanum tuberosum (Potato).